The chain runs to 120 residues: Ribosome-binding factor A (120 aa).

The protein belongs to the RbfA family. Monomer. Binds 30S ribosomal subunits, but not 50S ribosomal subunits or 70S ribosomes.

It localises to the cytoplasm. Its function is as follows. One of several proteins that assist in the late maturation steps of the functional core of the 30S ribosomal subunit. Associates with free 30S ribosomal subunits (but not with 30S subunits that are part of 70S ribosomes or polysomes). Required for efficient processing of 16S rRNA. May interact with the 5'-terminal helix region of 16S rRNA. This is Ribosome-binding factor A from Rickettsia rickettsii (strain Iowa).